A 548-amino-acid polypeptide reads, in one-letter code: Glucan 1,4-alpha-maltotetraohydrolase (548 aa).

The first 21 residues, 1 to 21 (MSHILRAAVLAAMLLPLPSMA), serve as a signal peptide directing secretion. Residues Asp-22, Gln-23, His-34, Asp-37, and Glu-38 each contribute to the Ca(2+) site. A substrate-binding site is contributed by 99-100 (YF). Asn-137 provides a ligand contact to Ca(2+). His-138 serves as a coordination point for substrate. A disulfide bridge links Cys-161 with Cys-171. Ca(2+) contacts are provided by Asp-172 and Asp-175. 177–181 (FIGGD) contacts substrate. Residue Asp-183 coordinates Ca(2+). Arg-212 provides a ligand contact to substrate. Catalysis depends on Asp-214, which acts as the Nucleophile. 217 to 218 (RG) lines the substrate pocket. Gly-218 provides a ligand contact to Ca(2+). A disulfide bond links Cys-237 and Cys-272. Residue Glu-240 is the Proton donor of the active site. Substrate-binding residues include His-314 and Gln-326. The CBM20 domain occupies 446 to 548 (GEPGALVSVS…SEGATTVGRL (103 aa)). Residues 529–542 (QGGANNSLTPSEGA) show a composition bias toward polar residues. The interval 529–548 (QGGANNSLTPSEGATTVGRL) is disordered.

The protein belongs to the glycosyl hydrolase 13 family. In terms of assembly, monomer. Ca(2+) is required as a cofactor.

The protein resides in the secreted. It carries out the reaction Hydrolysis of (1-&gt;4)-alpha-D-glucosidic linkages in amylaceous polysaccharides, to remove successive maltotetraose residues from the non-reducing chain ends.. It participates in glycan degradation; starch degradation. This Stutzerimonas stutzeri (Pseudomonas stutzeri) protein is Glucan 1,4-alpha-maltotetraohydrolase (amyP).